Here is a 205-residue protein sequence, read N- to C-terminus: Protein-L-isoaspartate O-methyltransferase (205 aa).

S56 is a catalytic residue.

The protein belongs to the methyltransferase superfamily. L-isoaspartyl/D-aspartyl protein methyltransferase family.

The protein resides in the cytoplasm. It carries out the reaction [protein]-L-isoaspartate + S-adenosyl-L-methionine = [protein]-L-isoaspartate alpha-methyl ester + S-adenosyl-L-homocysteine. Catalyzes the methyl esterification of L-isoaspartyl residues in peptides and proteins that result from spontaneous decomposition of normal L-aspartyl and L-asparaginyl residues. It plays a role in the repair and/or degradation of damaged proteins. The protein is Protein-L-isoaspartate O-methyltransferase of Aeromonas salmonicida (strain A449).